Here is a 225-residue protein sequence, read N- to C-terminus: uncharacterized protein (225 aa).

A helical membrane pass occupies residues 12-32 (AGFMMIFVFVIASFLLVLLFF).

Its subcellular location is the cell membrane. This is an uncharacterized protein from Bacillus subtilis (strain 168).